The sequence spans 89 residues: Small ribosomal subunit protein bS20 (89 aa).

Residues 1 to 21 (MANSAQAKKRARQNVKARKHN) are disordered. Basic residues predominate over residues 7–21 (AKKRARQNVKARKHN).

It belongs to the bacterial ribosomal protein bS20 family.

Functionally, binds directly to 16S ribosomal RNA. The chain is Small ribosomal subunit protein bS20 from Acinetobacter baylyi (strain ATCC 33305 / BD413 / ADP1).